A 36-amino-acid polypeptide reads, in one-letter code: Alpha-amylase inhibitor AI-3688 (36 aa).

A disulfide bridge links C9 with C25.

In terms of biological role, inhibits mammalian alpha-amylases specifically but has no action on plant and microbial alpha-amylases. This is Alpha-amylase inhibitor AI-3688 from Kitasatospora aureofaciens (Streptomyces aureofaciens).